Consider the following 394-residue polypeptide: Acetate kinase (394 aa).

Asn10 contributes to the Mg(2+) binding site. Lys17 serves as a coordination point for ATP. Arg87 is a substrate binding site. Asp144 functions as the Proton donor/acceptor in the catalytic mechanism. ATP-binding positions include 204 to 208, 279 to 281, and 327 to 331; these read HLGNG, DMR, and GIGEN. Glu381 lines the Mg(2+) pocket.

The protein belongs to the acetokinase family. Homodimer. Mg(2+) is required as a cofactor. The cofactor is Mn(2+).

The protein localises to the cytoplasm. It carries out the reaction acetate + ATP = acetyl phosphate + ADP. The protein operates within metabolic intermediate biosynthesis; acetyl-CoA biosynthesis; acetyl-CoA from acetate: step 1/2. Functionally, catalyzes the formation of acetyl phosphate from acetate and ATP. Can also catalyze the reverse reaction. This chain is Acetate kinase, found in Pseudomonas aeruginosa (strain LESB58).